Reading from the N-terminus, the 422-residue chain is 5'-deoxyadenosine deaminase (422 aa).

Zn(2+) contacts are provided by H57 and H59. Positions 86 and 178 each coordinate substrate. H205 is a binding site for Zn(2+). Substrate is bound by residues E208 and D294. A Zn(2+)-binding site is contributed by D294.

Belongs to the metallo-dependent hydrolases superfamily. MTA/SAH deaminase family. As to quaternary structure, homotetramer. Requires Zn(2+) as cofactor.

It carries out the reaction 5'-deoxyadenosine + H2O + H(+) = 5'-deoxyinosine + NH4(+). The enzyme catalyses S-adenosyl-L-homocysteine + H2O + H(+) = S-inosyl-L-homocysteine + NH4(+). The catalysed reaction is S-methyl-5'-thioadenosine + H2O + H(+) = S-methyl-5'-thioinosine + NH4(+). It catalyses the reaction adenosine + H2O + H(+) = inosine + NH4(+). Its pathway is amino-acid biosynthesis; S-adenosyl-L-methionine biosynthesis. Functionally, catalyzes the deamination of three SAM-derived enzymatic products, namely 5'-deoxyadenosine, S-adenosyl-L-homocysteine, and 5'-methylthioadenosine, to produce the inosine analogs. Can also deaminate adenosine. The preferred substrate for this enzyme is 5'-deoxyadenosine, but all these substrates are efficiently deaminated. Likely functions in a S-adenosyl-L-methionine (SAM) recycling pathway from S-adenosyl-L-homocysteine (SAH) produced from SAM-dependent methylation reactions. May also be involved in the recycling of 5'-deoxyadenosine, whereupon the 5'-deoxyribose moiety of 5'-deoxyinosine is further metabolized to deoxyhexoses used for the biosynthesis of aromatic amino acids in methanogens. The sequence is that of 5'-deoxyadenosine deaminase from Methanococcus maripaludis (strain DSM 14266 / JCM 13030 / NBRC 101832 / S2 / LL).